Reading from the N-terminus, the 67-residue chain is Sec-independent protein translocase protein TatA (67 aa).

The chain crosses the membrane as a helical span at residues 1–21 (MFGIGIQELLVVLVLVLLVFG). The tract at residues 46 to 67 (PDEIDITPGKKNGKTDKDDKQA) is disordered. The segment covering 58 to 67 (GKTDKDDKQA) has biased composition (basic and acidic residues).

This sequence belongs to the TatA/E family. As to quaternary structure, the Tat system comprises two distinct complexes: a TatABC complex, containing multiple copies of TatA, TatB and TatC subunits, and a separate TatA complex, containing only TatA subunits. Substrates initially bind to the TatABC complex, which probably triggers association of the separate TatA complex to form the active translocon.

It is found in the cell inner membrane. Part of the twin-arginine translocation (Tat) system that transports large folded proteins containing a characteristic twin-arginine motif in their signal peptide across membranes. TatA could form the protein-conducting channel of the Tat system. The sequence is that of Sec-independent protein translocase protein TatA from Nitratidesulfovibrio vulgaris (strain DSM 19637 / Miyazaki F) (Desulfovibrio vulgaris).